Reading from the N-terminus, the 335-residue chain is Cathepsin B-like cysteine proteinase 4 (335 aa).

An N-terminal signal peptide occupies residues 1-15; that stretch reads MKYLILAALVAVTAG. A propeptide spanning residues 16–80 is cleaved from the precursor; it reads LVIPLVPKTQ…VVKHDINEDT (65 aa). Cystine bridges form between Cys-94-Cys-123, Cys-106-Cys-150, Cys-142-Cys-209, Cys-143-Cys-146, Cys-179-Cys-213, and Cys-187-Cys-199. Cys-109 is a catalytic residue. A glycan (N-linked (GlcNAc...) asparagine) is linked at Asn-193. Active-site residues include His-281 and Asn-301.

It belongs to the peptidase C1 family.

Its subcellular location is the secreted. In terms of biological role, thiol protease which shows activity against the fluorogenic substrate z-Arg-Arg-AMC. This Caenorhabditis elegans protein is Cathepsin B-like cysteine proteinase 4 (cpr-4).